Reading from the N-terminus, the 216-residue chain is Inactive ribonuclease-like protein 10 (216 aa).

Residues 1-26 (MKLNLVQIFFMLLMLLLGLGMGLGLG) form the signal peptide. The segment at 43–65 (EFWSSDSQDKAEATEEGDGTQTT) is disordered.

Belongs to the pancreatic ribonuclease family. In terms of processing, the N-terminus is blocked. Glycosylated.

The protein resides in the secreted. Secreted proximal epididymal protein required for post-testicular sperm maturation and male fertility. May be involved in sperm adhesion to the egg zona pellucida. Does not have ribonuclease activity. The sequence is that of Inactive ribonuclease-like protein 10 (RNASE10) from Homo sapiens (Human).